The following is a 220-amino-acid chain: Chaperone protein TorD (220 aa).

Belongs to the TorD/DmsD family. TorD subfamily.

It localises to the cytoplasm. Functionally, involved in the biogenesis of TorA. Acts on TorA before the insertion of the molybdenum cofactor and, as a result, probably favors a conformation of the apoenzyme that is competent for acquiring the cofactor. This is Chaperone protein TorD from Vibrio cholerae serotype O1 (strain ATCC 39315 / El Tor Inaba N16961).